The chain runs to 96 residues: Protein YddL (96 aa).

Residues 1-21 form the signal peptide; the sequence is MKLKIVAVVVTGLLAANVAHA.

The protein is Protein YddL (yddL) of Escherichia coli (strain K12).